The chain runs to 94 residues: Putative gene 47 protein (94 aa).

This chain is Putative gene 47 protein (47), found in Bacillus subtilis (Bacteriophage SP01).